A 209-amino-acid polypeptide reads, in one-letter code: Ribonuclease HII (209 aa).

An RNase H type-2 domain is found at 5-202 (SMTLGIDEAG…KNRILNPKLL (198 aa)). A divalent metal cation-binding residues include Asp-11, Glu-12, and Asp-108.

This sequence belongs to the RNase HII family. Requires Mn(2+) as cofactor. Mg(2+) serves as cofactor.

It is found in the cytoplasm. It carries out the reaction Endonucleolytic cleavage to 5'-phosphomonoester.. In terms of biological role, endonuclease that specifically degrades the RNA of RNA-DNA hybrids. The chain is Ribonuclease HII (rnhB) from Helicobacter pylori (strain J99 / ATCC 700824) (Campylobacter pylori J99).